The chain runs to 82 residues: Large ribosomal subunit protein eL14 (82 aa).

Belongs to the eukaryotic ribosomal protein eL14 family.

This is Large ribosomal subunit protein eL14 from Pyrococcus abyssi (strain GE5 / Orsay).